Reading from the N-terminus, the 346-residue chain is N-acetyl-gamma-glutamyl-phosphate reductase (346 aa).

The active site involves C151.

It belongs to the NAGSA dehydrogenase family. Type 1 subfamily.

The protein resides in the cytoplasm. The catalysed reaction is N-acetyl-L-glutamate 5-semialdehyde + phosphate + NADP(+) = N-acetyl-L-glutamyl 5-phosphate + NADPH + H(+). The protein operates within amino-acid biosynthesis; L-arginine biosynthesis; N(2)-acetyl-L-ornithine from L-glutamate: step 3/4. Functionally, catalyzes the NADPH-dependent reduction of N-acetyl-5-glutamyl phosphate to yield N-acetyl-L-glutamate 5-semialdehyde. In Ehrlichia chaffeensis (strain ATCC CRL-10679 / Arkansas), this protein is N-acetyl-gamma-glutamyl-phosphate reductase.